The following is a 530-amino-acid chain: DEK domain-containing chromatin-associated protein 2 (530 aa).

Composition is skewed to basic and acidic residues over residues methionine 1–glutamate 47 and alanine 57–glutamate 68. Residues methionine 1–glycine 130 form a disordered region. Positions isoleucine 41–glutamate 61 form a coiled coil. A compositionally biased stretch (acidic residues) spans aspartate 69–glycine 82. 2 stretches are compositionally biased toward basic and acidic residues: residues serine 83 to threonine 93 and arginine 100 to arginine 110. Residues glutamate 185 to glutamate 205 are a coiled coil. Residues isoleucine 246 to lysine 430 are disordered. Positions alanine 253–glycine 263 are enriched in basic residues. A Nuclear localization signal 1 motif is present at residues proline 260 to glutamate 267. Residues serine 286–glutamate 332 show a composition bias toward acidic residues. 2 short sequence motifs (nuclear localization signal) span residues serine 343 to serine 350 and alanine 384 to histidine 391. A compositionally biased stretch (polar residues) spans lysine 374–alanine 384. The span at glutamine 387–glutamate 397 shows a compositional bias: basic and acidic residues. Residues glutamate 426–asparagine 481 enclose the DEK-C domain. DNA-binding regions lie at residues aspartate 444–serine 458 and lysine 473–threonine 477. The segment at alanine 482–aspartate 530 is disordered. A compositionally biased stretch (acidic residues) spans threonine 484–alanine 497. Positions glutamate 492 to glutamate 527 form a coiled coil. Basic and acidic residues predominate over residues glutamate 516–aspartate 530.

As to quaternary structure, found in a mRNA splicing-dependent exon junction complex (EJC). Binds specifically histones H3 and H4.

The protein localises to the nucleus. It localises to the nucleolus. Its function is as follows. Chromatin-associated protein which contributes to the modulation of chromatin structure (such as super-helical structure of DNA) and function. Binds to chromatin of protein-coding genes throughout the genome to regulate nucleosome occupancy and chromatin accessibility, and to modulate the expression of target genes. The polypeptide is DEK domain-containing chromatin-associated protein 2 (Arabidopsis thaliana (Mouse-ear cress)).